Here is a 520-residue protein sequence, read N- to C-terminus: tRNA (guanine-N(7)-)-methyltransferase non-catalytic subunit TRM82 (520 aa).

The tract at residues 51–102 (PLDSEISPDRASSAGTCAEPPEKRRKLTPPVDESGEAQTEQSAKAKARKSQT) is disordered. WD repeat units lie at residues 105–145 (QAWS…KLTQ), 244–291 (GHVS…HIIH), and 296–338 (GHTS…QTIP).

This sequence belongs to the WD repeat TRM82 family. In terms of assembly, forms a heterodimer with the catalytic subunit TRM8.

Its subcellular location is the nucleus. Its pathway is tRNA modification; N(7)-methylguanine-tRNA biosynthesis. In terms of biological role, required for the formation of N(7)-methylguanine at position 46 (m7G46) in tRNA. In the complex, it is required to stabilize and induce conformational changes of the catalytic subunit. The chain is tRNA (guanine-N(7)-)-methyltransferase non-catalytic subunit TRM82 from Coccidioides immitis (strain RS) (Valley fever fungus).